A 115-amino-acid chain; its full sequence is NTF2-related export protein 1 (115 aa).

Positions 7 to 115 (YAQEFVQRYY…LVLRSSTNFL (109 aa)) constitute an NTF2 domain.

The protein resides in the nucleus. Stimulator of protein export for NES-containing proteins. Also plays a role in mRNA nuclear export. This is NTF2-related export protein 1 (nxt1) from Schizosaccharomyces pombe (strain 972 / ATCC 24843) (Fission yeast).